The sequence spans 108 residues: MSGGSSRRYPPELRERAVRMVAEIRGQHDSEWAAISEVARLLGVGCAETVRKWVRQAQVDAGARPGTTTEESAELKRLRRDNAELRRANAILKTASAFFAAELDRPAR.

Belongs to the transposase 8 family.

The chain is Insertion element IS6110 uncharacterized 12.0 kDa protein from Mycobacterium bovis (strain ATCC BAA-935 / AF2122/97).